The chain runs to 288 residues: Sulfur carrier protein FdhD (288 aa).

The active-site Cysteine persulfide intermediate is cysteine 122. 268–273 (FVRGER) serves as a coordination point for Mo-bis(molybdopterin guanine dinucleotide).

Belongs to the FdhD family.

The protein localises to the cytoplasm. In terms of biological role, required for formate dehydrogenase (FDH) activity. Acts as a sulfur carrier protein that transfers sulfur from IscS to the molybdenum cofactor prior to its insertion into FDH. The protein is Sulfur carrier protein FdhD of Anaeromyxobacter dehalogenans (strain 2CP-1 / ATCC BAA-258).